The chain runs to 358 residues: Carbamoyl phosphate synthase small chain (358 aa).

CPSase regions lie at residues 1-168 (MYNR…PALG) and 1-171 (MYNR…GRGR). Ser46, Gly220, and Gly222 together coordinate L-glutamine. The Glutamine amidotransferase type-1 domain occupies 172–358 (RVVLVDLGMK…FIKNIDNNMK (187 aa)). The active-site Nucleophile is Cys247. Residues Met248, Gln251, Asn289, Gly291, and Tyr292 each coordinate L-glutamine. Catalysis depends on residues His332 and Glu334.

Belongs to the CarA family. Composed of two chains; the small (or glutamine) chain promotes the hydrolysis of glutamine to ammonia, which is used by the large (or ammonia) chain to synthesize carbamoyl phosphate. Tetramer of heterodimers (alpha,beta)4.

The enzyme catalyses hydrogencarbonate + L-glutamine + 2 ATP + H2O = carbamoyl phosphate + L-glutamate + 2 ADP + phosphate + 2 H(+). The catalysed reaction is L-glutamine + H2O = L-glutamate + NH4(+). The protein operates within amino-acid biosynthesis; L-arginine biosynthesis; carbamoyl phosphate from bicarbonate: step 1/1. Its pathway is pyrimidine metabolism; UMP biosynthesis via de novo pathway; (S)-dihydroorotate from bicarbonate: step 1/3. Functionally, small subunit of the glutamine-dependent carbamoyl phosphate synthetase (CPSase). CPSase catalyzes the formation of carbamoyl phosphate from the ammonia moiety of glutamine, carbonate, and phosphate donated by ATP, constituting the first step of 2 biosynthetic pathways, one leading to arginine and/or urea and the other to pyrimidine nucleotides. The small subunit (glutamine amidotransferase) binds and cleaves glutamine to supply the large subunit with the substrate ammonia. The protein is Carbamoyl phosphate synthase small chain of Fusobacterium nucleatum subsp. nucleatum (strain ATCC 25586 / DSM 15643 / BCRC 10681 / CIP 101130 / JCM 8532 / KCTC 2640 / LMG 13131 / VPI 4355).